A 242-amino-acid chain; its full sequence is Methylthioribulose-1-phosphate dehydratase (242 aa).

Positions 1–11 (MAQEIQKENND) are enriched in basic and acidic residues. A disordered region spans residues 1–20 (MAQEIQKENNDHLVQSSDPE). Substrate is bound at residue C100. The Zn(2+) site is built by H117 and H119. E146 serves as the catalytic Proton donor/acceptor. H202 serves as a coordination point for Zn(2+).

It belongs to the aldolase class II family. MtnB subfamily. Zn(2+) serves as cofactor.

The protein resides in the cytoplasm. The catalysed reaction is 5-(methylsulfanyl)-D-ribulose 1-phosphate = 5-methylsulfanyl-2,3-dioxopentyl phosphate + H2O. It participates in amino-acid biosynthesis; L-methionine biosynthesis via salvage pathway; L-methionine from S-methyl-5-thio-alpha-D-ribose 1-phosphate: step 2/6. Functionally, catalyzes the dehydration of methylthioribulose-1-phosphate (MTRu-1-P) into 2,3-diketo-5-methylthiopentyl-1-phosphate (DK-MTP-1-P). The polypeptide is Methylthioribulose-1-phosphate dehydratase (Aspergillus niger (strain ATCC MYA-4892 / CBS 513.88 / FGSC A1513)).